Reading from the N-terminus, the 99-residue chain is Small ribosomal subunit protein bS6c (99 aa).

The protein belongs to the bacterial ribosomal protein bS6 family.

It localises to the plastid. The protein localises to the chloroplast. Binds together with bS18 to 16S ribosomal RNA. The protein is Small ribosomal subunit protein bS6c of Cyanidioschyzon merolae (strain NIES-3377 / 10D) (Unicellular red alga).